Consider the following 84-residue polypeptide: Small ribosomal subunit protein bS20 (84 aa).

The protein belongs to the bacterial ribosomal protein bS20 family.

Its function is as follows. Binds directly to 16S ribosomal RNA. In Lacticaseibacillus casei (strain BL23) (Lactobacillus casei), this protein is Small ribosomal subunit protein bS20.